A 113-amino-acid chain; its full sequence is Mini zinc finger protein 2 (113 aa).

Residues 24 to 83 (YGECRRNHAASTGGHAVDGCREFIAAEDGGGGNSTSAVGVAAAALKCAACGCHRSFHRRV) form a ZF-HD dimerization-type; degenerate zinc finger. A disordered region spans residues 93–113 (DCASGDTSSSSPSSSSSLSSE). Residues 100–113 (SSSSPSSSSSLSSE) show a composition bias toward low complexity.

As to quaternary structure, homo- and heterodimers.

Its subcellular location is the cytoplasm. Its function is as follows. Inhibits zinc finger homeodomain (ZHD) transcription factors, by interacting with them to prevent both their nuclear localization and their DNA-binding properties. This chain is Mini zinc finger protein 2 (MIF3), found in Oryza sativa subsp. japonica (Rice).